A 308-amino-acid chain; its full sequence is Elongation factor Ts (308 aa).

The segment at Thr80–Val83 is involved in Mg(2+) ion dislocation from EF-Tu.

The protein belongs to the EF-Ts family.

It localises to the cytoplasm. Its function is as follows. Associates with the EF-Tu.GDP complex and induces the exchange of GDP to GTP. It remains bound to the aminoacyl-tRNA.EF-Tu.GTP complex up to the GTP hydrolysis stage on the ribosome. The sequence is that of Elongation factor Ts from Rhizobium rhizogenes (strain K84 / ATCC BAA-868) (Agrobacterium radiobacter).